The primary structure comprises 375 residues: uncharacterized protein (375 aa).

The protein belongs to the mimivirus L17x/L18x family.

This is an uncharacterized protein from Acanthamoeba polyphaga mimivirus (APMV).